The primary structure comprises 378 residues: Dual-specificity RNA methyltransferase RlmN (378 aa).

Glutamate 96 (proton acceptor) is an active-site residue. Positions 102–342 (QGGRGTLCVS…VRTTRGDDID (241 aa)) constitute a Radical SAM core domain. The cysteines at positions 109 and 345 are disulfide-linked. The [4Fe-4S] cluster site is built by cysteine 116, cysteine 120, and cysteine 123. S-adenosyl-L-methionine contacts are provided by residues 170–171 (GE), serine 202, 224–226 (SLH), and asparagine 302. Cysteine 345 (S-methylcysteine intermediate) is an active-site residue.

It belongs to the radical SAM superfamily. RlmN family. [4Fe-4S] cluster serves as cofactor.

It is found in the cytoplasm. The catalysed reaction is adenosine(2503) in 23S rRNA + 2 reduced [2Fe-2S]-[ferredoxin] + 2 S-adenosyl-L-methionine = 2-methyladenosine(2503) in 23S rRNA + 5'-deoxyadenosine + L-methionine + 2 oxidized [2Fe-2S]-[ferredoxin] + S-adenosyl-L-homocysteine. The enzyme catalyses adenosine(37) in tRNA + 2 reduced [2Fe-2S]-[ferredoxin] + 2 S-adenosyl-L-methionine = 2-methyladenosine(37) in tRNA + 5'-deoxyadenosine + L-methionine + 2 oxidized [2Fe-2S]-[ferredoxin] + S-adenosyl-L-homocysteine. Specifically methylates position 2 of adenine 2503 in 23S rRNA and position 2 of adenine 37 in tRNAs. m2A2503 modification seems to play a crucial role in the proofreading step occurring at the peptidyl transferase center and thus would serve to optimize ribosomal fidelity. The chain is Dual-specificity RNA methyltransferase RlmN from Pseudomonas paraeruginosa (strain DSM 24068 / PA7) (Pseudomonas aeruginosa (strain PA7)).